The chain runs to 871 residues: Protein TIC 100 (871 aa).

The disordered stretch occupies residues 1–85 (MANEELTESQ…NANPETNIRR (85 aa)). Over residues 8 to 20 (ESQQQEDPSQQLP) the composition is skewed to polar residues. Over residues 30-46 (SDSNSDSDASSQSSGDD) the composition is skewed to low complexity. 3 MORN repeats span residues 219–239 (YEGTVWDDLAQGKGVYIAENG), 243–257 (YEGEWLQNDMEGHGV), and 337–352 (YAGQWKHSRMHGCGVY). The residue at position 238 (Asn-238) is a Deamidated asparagine. Positions 587–647 (MLDGLEKWTE…QEEEKKTEMG (61 aa)) form a coiled coil. 2 disordered regions span residues 631–654 (EELKKKEQEEEKKTEMGLTEEDED) and 669–721 (KEKI…NSPF). The span at 632-645 (ELKKKEQEEEKKTE) shows a compositional bias: basic and acidic residues. Thr-649 is subject to Phosphothreonine. The span at 669–683 (KEKIQENKQEEKYKD) shows a compositional bias: basic and acidic residues. The span at 684–704 (DDDEDDDDGDDDDDDDDDDDL) shows a compositional bias: acidic residues.

In terms of assembly, part of the Tic complex. Component of the 1-MD complex, composed of TIC20-I, TIC214, TIC100 and TIC56. Interacts with the translocating preproteins. Hydrolysis of ATP is essential for the formation of this complex. The 1-MD complex interacts with TIC21. As to expression, preferentially expressed in ovules, and moderately expressed in leaves and siliques.

It localises to the plastid. It is found in the chloroplast inner membrane. Functionally, involved in protein precursor import into chloroplasts. May be part of an intermediate translocation complex acting as a protein-conducting channel at the inner envelope. Plays an important role during embryogenesis and chloroplast biogenesis. The protein is Protein TIC 100 of Arabidopsis thaliana (Mouse-ear cress).